A 164-amino-acid polypeptide reads, in one-letter code: Low molecular weight phosphotyrosine protein phosphatase 2 (164 aa).

Cys-14 serves as the catalytic Nucleophile. Arg-20 is a catalytic residue. The Proton donor role is filled by Asp-130.

It belongs to the low molecular weight phosphotyrosine protein phosphatase family. In terms of tissue distribution, cone cells and primary pigment cells in developing pupal retina.

It is found in the cytoplasm. It carries out the reaction O-phospho-L-tyrosyl-[protein] + H2O = L-tyrosyl-[protein] + phosphate. The enzyme catalyses a phosphate monoester + H2O = an alcohol + phosphate. In terms of biological role, catalyzes the dephosphorylation of tyrosine phosphorylated proteins and low-MW aryl phosphates. Can contribute to the regulation of a variety of developmental processes. The polypeptide is Low molecular weight phosphotyrosine protein phosphatase 2 (primo-2) (Drosophila melanogaster (Fruit fly)).